We begin with the raw amino-acid sequence, 542 residues long: Probable serine/threonine-protein kinase ndrB (542 aa).

The disordered stretch occupies residues 1-52 (MNVERKLESLSLQQQQQEEQQDESEQPNQGVEDEEEEEYDEEEYEEEEEDIN). Residues 9-18 (SLSLQQQQQE) are compositionally biased toward low complexity. A compositionally biased stretch (acidic residues) spans 19 to 51 (EQQDESEQPNQGVEDEEEEEYDEEEYEEEEEDI). The Protein kinase domain maps to 130–437 (FESIRIIGRG…VEEIQSHPFF (308 aa)). ATP contacts are provided by residues 136–144 (IGRGAFGEV) and Lys159. Asp258 serves as the catalytic Proton acceptor. The AGC-kinase C-terminal domain maps to 438-510 (KGVDWRRLRE…RNFDAMRDAF (73 aa)). Residues 452-486 (IIPQLSSPTDTSNFDHYEEEQQPEPMQPVQSKSRR) form a disordered region. Polar residues predominate over residues 455–465 (QLSSPTDTSNF).

The protein belongs to the protein kinase superfamily. AGC Ser/Thr protein kinase family.

It is found in the cytoplasm. It catalyses the reaction L-seryl-[protein] + ATP = O-phospho-L-seryl-[protein] + ADP + H(+). It carries out the reaction L-threonyl-[protein] + ATP = O-phospho-L-threonyl-[protein] + ADP + H(+). This is Probable serine/threonine-protein kinase ndrB (ndrB) from Dictyostelium discoideum (Social amoeba).